The following is a 458-amino-acid chain: Succinate-semialdehyde dehydrogenase [NADP(+)] 1 (458 aa).

NADP(+) contacts are provided by residues 134 to 135, 158 to 161, and 210 to 211; these read WN, KHAS, and GS. Glutamate 232 (proton acceptor) is an active-site residue. NADP(+) is bound at residue leucine 233. Cysteine 266 acts as the Nucleophile in catalysis. Glutamate 363 serves as a coordination point for NADP(+).

The protein belongs to the aldehyde dehydrogenase family.

The catalysed reaction is succinate semialdehyde + NADP(+) + H2O = succinate + NADPH + 2 H(+). Functionally, catalyzes the NADP(+)-dependent oxidation of succinate semialdehyde to succinate. It is believed to be the main source of succinate semialdehyde dehydrogenase activity in Mycobacterium. The sequence is that of Succinate-semialdehyde dehydrogenase [NADP(+)] 1 (gabD1) from Mycobacterium ulcerans (strain Agy99).